We begin with the raw amino-acid sequence, 215 residues long: Urease accessory protein UreG (215 aa).

24-31 serves as a coordination point for GTP; it reads GPVGSGKT.

The protein belongs to the SIMIBI class G3E GTPase family. UreG subfamily. In terms of assembly, homodimer. UreD, UreF and UreG form a complex that acts as a GTP-hydrolysis-dependent molecular chaperone, activating the urease apoprotein by helping to assemble the nickel containing metallocenter of UreC. The UreE protein probably delivers the nickel.

The protein resides in the cytoplasm. Facilitates the functional incorporation of the urease nickel metallocenter. This process requires GTP hydrolysis, probably effectuated by UreG. In Burkholderia ambifaria (strain MC40-6), this protein is Urease accessory protein UreG.